The primary structure comprises 497 residues: MSDLFATITTPNGVKYEQPLGLFIDGEFVKGAEGKTFETINPSNEKPIVAVHEATEKDVDTAVAAARKAFEGSWRQVTPSTRGRMLTKLADLFERDAEILASIEALDNGKSITMAHGDIAGAAGCLRYYGGWADKIHGQTIDTNSETLNYTRHEPIGVCGQIIPWNFPLLMWAWKIGPAIATGNTVVIKTAEQTPLSGLYAANVIKEAGIPAGVVNVISGFGRVAGSAISHHMDIDKVAFTGSTLVGRTILQAAAKSNLKKVTLELGGKSPNIVFNDADIDNAISWANFGIFYNHGQCCCAGSRILVQEGIYDKFIARLKERALQNKVGDPFAKDTFQGPQVSQLQFDRIMEYIQHGKDAGATVAVGGERHGTEGYFIQPTVFTDVTSDMKINQEEIFGPVVTVQKFKDVEDAIKIGNSTSYGLAAGIHTKDVTTAIRVSNALRAGTVWVNSYNLIQYQVPFGGFKESGIGRELGSYALENYTQIKAVHYRLGDALF.

242–247 (GSTLVG) is a binding site for NAD(+). Catalysis depends on Glu265, which acts as the Proton acceptor. Cys299 serves as the catalytic Nucleophile.

Belongs to the aldehyde dehydrogenase family.

The enzyme catalyses an aldehyde + NAD(+) + H2O = a carboxylate + NADH + 2 H(+). Its pathway is alcohol metabolism; ethanol degradation; acetate from ethanol: step 2/2. In Aspergillus niger, this protein is Aldehyde dehydrogenase (aldA).